The following is a 508-amino-acid chain: Cytochrome P450 4A12 (508 aa).

A run of 2 helical transmembrane segments spans residues 10 to 30 and 120 to 140; these read IFPG…VLLL and FLAP…WFQH. Heme is bound at residue glutamate 319. The residue at position 438 (serine 438) is a Phosphoserine. A heme-binding site is contributed by cysteine 455.

Belongs to the cytochrome P450 family. Heme serves as cofactor. In terms of tissue distribution, expressed at proximal straight tubules and preglomerular arteries of the outer medulla as well in the cortex regions of kidney (at protein level).

The protein localises to the endoplasmic reticulum membrane. Its subcellular location is the microsome membrane. The catalysed reaction is an organic molecule + reduced [NADPH--hemoprotein reductase] + O2 = an alcohol + oxidized [NADPH--hemoprotein reductase] + H2O + H(+). It carries out the reaction dodecanoate + reduced [NADPH--hemoprotein reductase] + O2 = 12-hydroxydodecanoate + oxidized [NADPH--hemoprotein reductase] + H2O + H(+). The enzyme catalyses dodecanoate + reduced [NADPH--hemoprotein reductase] + O2 = (11R)-hydroxydodecanoate + oxidized [NADPH--hemoprotein reductase] + H2O + H(+). It catalyses the reaction (5Z,8Z,11Z,14Z)-eicosatetraenoate + reduced [NADPH--hemoprotein reductase] + O2 = 20-hydroxy-(5Z,8Z,11Z,14Z)-eicosatetraenoate + oxidized [NADPH--hemoprotein reductase] + H2O + H(+). The catalysed reaction is prostaglandin A1 + reduced [NADPH--hemoprotein reductase] + O2 = 20-hydroxy prostaglandin A1 + oxidized [NADPH--hemoprotein reductase] + H2O + H(+). It functions in the pathway lipid metabolism; fatty acid metabolism. Its activity is regulated as follows. Activated by cytochrome b5 and phosphatidylserine. Its function is as follows. A cytochrome P450 monooxygenase involved in the metabolism of fatty acids. Catalyzes predominantly the oxidation of the terminal carbon (omega-oxidation) of saturated and unsaturated fatty acids. May act as a major omega-hydroxylase for dodecanoic (lauric) acid in kidney. At preglomerular arteries, may participate in omega-hydroxylation of (5Z,8Z,11Z,14Z)-eicosatetraenoic acid (arachidonate) to 20-hydroxyeicosatetraenoic acid (20-HETE), a signaling molecule acting both as vasoconstrictive and natriuretic with overall effect on arterial blood pressure. Can also catalyze the oxidation of the penultimate carbon (omega-1 oxidation) of fatty acids with lower efficiency, displaying a preference for the (R)-stereoisomer. Mechanistically, uses molecular oxygen inserting one oxygen atom into a substrate, and reducing the second into a water molecule, with two electrons provided by NADPH via cytochrome P450 reductase (NADPH--hemoprotein reductase). This Rattus norvegicus (Rat) protein is Cytochrome P450 4A12 (Cyp4a12).